A 532-amino-acid polypeptide reads, in one-letter code: Phosphoenolpyruvate carboxykinase (ATP) (532 aa).

Residues Arg-60, Tyr-194, and Lys-200 each contribute to the substrate site. ATP-binding positions include Lys-200, His-219, and 237 to 245 (GLSGTGKTT). Mn(2+)-binding residues include Lys-200 and His-219. Asp-258 is a binding site for Mn(2+). The ATP site is built by Glu-286, Arg-324, and Thr-449. Arg-324 lines the substrate pocket.

It belongs to the phosphoenolpyruvate carboxykinase (ATP) family. The cofactor is Mn(2+).

The protein localises to the cytoplasm. It carries out the reaction oxaloacetate + ATP = phosphoenolpyruvate + ADP + CO2. It participates in carbohydrate biosynthesis; gluconeogenesis. In terms of biological role, involved in the gluconeogenesis. Catalyzes the conversion of oxaloacetate (OAA) to phosphoenolpyruvate (PEP) through direct phosphoryl transfer between the nucleoside triphosphate and OAA. The protein is Phosphoenolpyruvate carboxykinase (ATP) of Ruegeria sp. (strain TM1040) (Silicibacter sp.).